Here is a 554-residue protein sequence, read N- to C-terminus: Phospho-2-dehydro-3-deoxyheptonate aldolase 1, chloroplastic (554 aa).

The transit peptide at 1–39 directs the protein to the chloroplast; sequence MSLATSSSMAGGAAVVPRSATATTASAFVTMKRRATAVR. A disordered region spans residues 41–70; that stretch reads VHAAEPSKNPPVGVPSAAKTSSPSVAAPEK.

It belongs to the class-II DAHP synthase family.

The protein resides in the plastid. Its subcellular location is the chloroplast. It carries out the reaction D-erythrose 4-phosphate + phosphoenolpyruvate + H2O = 7-phospho-2-dehydro-3-deoxy-D-arabino-heptonate + phosphate. The protein operates within metabolic intermediate biosynthesis; chorismate biosynthesis; chorismate from D-erythrose 4-phosphate and phosphoenolpyruvate: step 1/7. The chain is Phospho-2-dehydro-3-deoxyheptonate aldolase 1, chloroplastic (DAHPS1) from Oryza sativa subsp. japonica (Rice).